The following is a 127-amino-acid chain: Large ribosomal subunit protein bL20 (127 aa).

The protein belongs to the bacterial ribosomal protein bL20 family.

Its function is as follows. Binds directly to 23S ribosomal RNA and is necessary for the in vitro assembly process of the 50S ribosomal subunit. It is not involved in the protein synthesizing functions of that subunit. The chain is Large ribosomal subunit protein bL20 from Bifidobacterium longum (strain DJO10A).